The sequence spans 371 residues: MQESGYVPLKIADPALLFAELGRQPLPGMSLEEMADLMADLGEPRFRAKQLFQWVYQKGVKDFDAMTNLPARLRQHLAGTTMLRLLEKETEQHDRRTGTTKYLFRLADGSQVESVLMRQSWGNSVCVTTQVGCRMGCTFCASTVGGLVRNLTAGEIVDQIVMMQRELPQGERISTVVLMGSGEPLENYDHVLKAVRLVHDPEGLNIGYRHITISTSGIVPGMRRLAEEGLPITLALSLHAPTDELRRQLMPVARIWPLAEVLAAAREYGEKTGRRVTYEYILIEGVNDGPEEARQLARLLKGALAHVNLIPMNPVAERPQYRRPGPERVNRFKEILESNGIATTVRREMGGEIDAACGQLRNRAQRKHMGR.

The Proton acceptor role is filled by glutamate 113. The 234-residue stretch at 119 to 352 folds into the Radical SAM core domain; that stretch reads QSWGNSVCVT…TTVRREMGGE (234 aa). A disulfide bridge connects residues cysteine 126 and cysteine 357. Residues cysteine 133, cysteine 137, and cysteine 140 each coordinate [4Fe-4S] cluster. S-adenosyl-L-methionine is bound by residues 182-183, serine 214, 237-239, and asparagine 313; these read GE and SLH. Cysteine 357 acts as the S-methylcysteine intermediate in catalysis.

The protein belongs to the radical SAM superfamily. RlmN family. [4Fe-4S] cluster serves as cofactor.

Its subcellular location is the cytoplasm. The enzyme catalyses adenosine(2503) in 23S rRNA + 2 reduced [2Fe-2S]-[ferredoxin] + 2 S-adenosyl-L-methionine = 2-methyladenosine(2503) in 23S rRNA + 5'-deoxyadenosine + L-methionine + 2 oxidized [2Fe-2S]-[ferredoxin] + S-adenosyl-L-homocysteine. The catalysed reaction is adenosine(37) in tRNA + 2 reduced [2Fe-2S]-[ferredoxin] + 2 S-adenosyl-L-methionine = 2-methyladenosine(37) in tRNA + 5'-deoxyadenosine + L-methionine + 2 oxidized [2Fe-2S]-[ferredoxin] + S-adenosyl-L-homocysteine. Functionally, specifically methylates position 2 of adenine 2503 in 23S rRNA and position 2 of adenine 37 in tRNAs. This chain is Probable dual-specificity RNA methyltransferase RlmN, found in Symbiobacterium thermophilum (strain DSM 24528 / JCM 14929 / IAM 14863 / T).